Here is a 397-residue protein sequence, read N- to C-terminus: Cysteine desulfurase IscS (397 aa).

Residues Gly-72–Ser-73, Asn-152, Gln-180, and Ser-200–His-202 contribute to the pyridoxal 5'-phosphate site. N6-(pyridoxal phosphate)lysine is present on Lys-203. A pyridoxal 5'-phosphate-binding site is contributed by Thr-238. The active-site Cysteine persulfide intermediate is Cys-328. Cys-328 is a [2Fe-2S] cluster binding site.

This sequence belongs to the class-V pyridoxal-phosphate-dependent aminotransferase family. NifS/IscS subfamily. As to quaternary structure, homodimer. Forms a heterotetramer with IscU, interacts with other sulfur acceptors. The cofactor is pyridoxal 5'-phosphate.

It localises to the cytoplasm. The catalysed reaction is (sulfur carrier)-H + L-cysteine = (sulfur carrier)-SH + L-alanine. It participates in cofactor biosynthesis; iron-sulfur cluster biosynthesis. Functionally, master enzyme that delivers sulfur to a number of partners involved in Fe-S cluster assembly, tRNA modification or cofactor biosynthesis. Catalyzes the removal of elemental sulfur atoms from cysteine to produce alanine. Functions as a sulfur delivery protein for Fe-S cluster synthesis onto IscU, an Fe-S scaffold assembly protein, as well as other S acceptor proteins. This chain is Cysteine desulfurase IscS, found in Clostridium botulinum (strain ATCC 19397 / Type A).